A 307-amino-acid polypeptide reads, in one-letter code: UPF0282 protein PH1002 (307 aa).

The protein belongs to the UPF0282 family.

The protein is UPF0282 protein PH1002 of Pyrococcus horikoshii (strain ATCC 700860 / DSM 12428 / JCM 9974 / NBRC 100139 / OT-3).